A 1712-amino-acid polypeptide reads, in one-letter code: Latent-transforming growth factor beta-binding protein 1 (1712 aa).

The first 23 residues, 1–23 (MAGAWLRWGLLLWAGLLAWSAHG), serve as a signal peptide directing secretion. Positions 65–118 (TAASSRALAGPPAERTRRTSQPGGAALPGLRSPLPPEPARPGGPSRQLHSKAGA) are disordered. Residues 181–213 (TKPSCVPPCQNGGMCLRPQLCVCKPGSKGKACE) form the EGF-like 1 domain. 3 disulfide bridges follow: cysteine 185/cysteine 195, cysteine 189/cysteine 201, and cysteine 203/cysteine 212. 2 N-linked (GlcNAc...) asparagine glycosylation sites follow: asparagine 339 and asparagine 370. Residues 391–423 (RVVICHLPCMNGGQCSSRDKCQCPPNFTGKLCQ) form the EGF-like 2 domain. Disulfide bonds link cysteine 395/cysteine 405, cysteine 399/cysteine 411, cysteine 413/cysteine 422, cysteine 551/cysteine 573, cysteine 560/cysteine 586, and cysteine 574/cysteine 589. Asparagine 416 is a glycosylation site (N-linked (GlcNAc...) asparagine). Residues 549-601 (GRCFQETIGSQCGKALPGLSKQEDCCGTVGTSWGFNKCQKCPKKQSYHGYTQM) form the TB 1 domain. N-linked (GlcNAc...) asparagine glycosylation occurs at asparagine 612. An EGF-like 3; calcium-binding domain is found at 618 to 658 (DINECQLQGVCPNGECLNTMGSYRCSCKMGFGPDPTFSSCV). Cystine bridges form between cysteine 622–cysteine 633, cysteine 628–cysteine 642, cysteine 644–cysteine 657, cysteine 671–cysteine 694, cysteine 681–cysteine 706, cysteine 695–cysteine 709, and cysteine 696–cysteine 721. A glycan (O-linked (Glc) serine) is linked at serine 639. The TB 2 domain occupies 669 to 721 (GPCYRLVSPGRHCMHPLSVHLTKQICCCSVGKAWGPHCEKCPLPGTAAFKEIC). The segment at 753-799 (NTQPVAKSTHPPPLPAKEEPVEALTSSWEHGPRGAEPEVVTAPPEKE) is disordered. Threonine 761 and threonine 793 each carry an O-linked (GalNAc...) threonine glycan. An EGF-like 4; calcium-binding domain is found at 865 to 906 (EINECTVNPDICGAGHCINLPVRYTCICYEGYKFSEQLRKCV). Intrachain disulfides connect cysteine 869-cysteine 881, cysteine 876-cysteine 890, cysteine 892-cysteine 905, cysteine 911-cysteine 923, cysteine 918-cysteine 932, cysteine 934-cysteine 947, cysteine 953-cysteine 964, cysteine 959-cysteine 973, cysteine 976-cysteine 988, cysteine 994-cysteine 1005, cysteine 1000-cysteine 1014, cysteine 1017-cysteine 1028, cysteine 1034-cysteine 1045, cysteine 1040-cysteine 1054, cysteine 1056-cysteine 1069, cysteine 1075-cysteine 1086, cysteine 1081-cysteine 1095, cysteine 1097-cysteine 1110, cysteine 1116-cysteine 1127, cysteine 1122-cysteine 1136, cysteine 1138-cysteine 1151, cysteine 1157-cysteine 1169, cysteine 1164-cysteine 1178, cysteine 1180-cysteine 1192, cysteine 1198-cysteine 1210, cysteine 1204-cysteine 1219, cysteine 1221-cysteine 1234, cysteine 1240-cysteine 1252, cysteine 1246-cysteine 1261, cysteine 1263-cysteine 1276, cysteine 1282-cysteine 1294, cysteine 1289-cysteine 1303, cysteine 1305-cysteine 1319, cysteine 1340-cysteine 1363, cysteine 1350-cysteine 1375, cysteine 1364-cysteine 1380, and cysteine 1365-cysteine 1392. The EGF-like 5; calcium-binding domain maps to 907 to 948 (DIDECAQVRHLCSQGRCENTEGSFLCVCPAGFMASEEGTNCI). Residue serine 929 is glycosylated (O-linked (Glc) serine). The EGF-like 6; calcium-binding domain maps to 949 to 989 (DVDECLRPDMCRDGRCINTAGAFRCEYCDSGYRMSRRGYCE). Asparagine 966 carries the (3R)-3-hydroxyasparagine modification. One can recognise an EGF-like 7; calcium-binding domain in the interval 990–1029 (DIDECLKPSTCPEEQCVNTPGSYQCVPCTEGFRGWNGQCL). O-linked (Glc) serine glycosylation occurs at serine 1011. Residues 1030–1070 (DVDECLQPKVCTNGSCTNLEGSYMCSCHRGYSPTPDHRHCQ) form the EGF-like 8; calcium-binding domain. Asparagine 1042 carries an N-linked (GlcNAc...) asparagine glycan. Serine 1051 is a glycosylation site (O-linked (Glc) serine). The 41-residue stretch at 1071-1111 (DIDECQQGNLCMNGQCRNTDGSFRCTCGQGYQLSAAKDQCE) folds into the EGF-like 9; calcium-binding domain. The region spanning 1112–1152 (DIDECEHHHLCSHGQCRNTEGSFQCVCNQGYRASVLGDHCE) is the EGF-like 10; calcium-binding domain. Asparagine 1129 bears the (3R)-3-hydroxyasparagine mark. Serine 1133 carries O-linked (Glc) serine glycosylation. One can recognise an EGF-like 11; calcium-binding domain in the interval 1153–1193 (DINECLEDSSVCQGGDCINTAGSYDCTCPDGFQLNDNKGCQ). The EGF-like 12; calcium-binding domain occupies 1194–1235 (DINECAQPGLCGSHGECLNTQGSFHCVCEQGFSISADGRTCE). O-linked (Glc) serine glycosylation is present at serine 1216. Residues 1236 to 1277 (DIDECVNNTVCDSHGFCDNTAGSFRCLCYQGFQAPQDGQGCV) enclose the EGF-like 13; calcium-binding domain. The N-linked (GlcNAc...) asparagine glycan is linked to asparagine 1242. The region spanning 1278-1320 (DVNECELLSGVCGEAFCENVEGSFLCVCADENQEYSPMTGQCR) is the EGF-like 14; calcium-binding domain. An 8-Cys3 region region spans residues 1335-1402 (EEKKECYYNL…PRGKGLVPAG (68 aa)). The TB 3 domain maps to 1338-1392 (KECYYNLNDASLCDNVLAPNVTKQECCCTSGAGWGDNCEIFPCPVQGTAEFTEMC). An N-linked (GlcNAc...) asparagine glycan is attached at asparagine 1357. At serine 1405 the chain carries Phosphoserine. One can recognise an EGF-like 15; calcium-binding domain in the interval 1415–1457 (DADECLLFGEEICKNGYCLNTQPGYECYCKQGTYYDPVKLQCF). Cystine bridges form between cysteine 1419/cysteine 1432, cysteine 1427/cysteine 1441, cysteine 1443/cysteine 1456, cysteine 1462/cysteine 1473, cysteine 1468/cysteine 1482, cysteine 1484/cysteine 1497, cysteine 1517/cysteine 1541, cysteine 1527/cysteine 1553, cysteine 1542/cysteine 1556, and cysteine 1543/cysteine 1568. Residues 1458 to 1498 (DMDECQDPNSCIDGQCVNTEGSYNCFCTHPMVLDASEKRCV) form the EGF-like 16; calcium-binding domain. O-linked (Glc) serine glycosylation is present at serine 1479. The segment at 1498 to 1712 (VQPTESNEQI…LNLDKESDLE (215 aa)) is C-terminal domain. The TB 4 domain maps to 1515–1568 (DLCWEHLSEEYVCSRPLVGKQTTYTECCCLYGEAWGMQCALCPMKDSDDYAQLC). Serine 1588 and serine 1607 each carry phosphoserine. The 41-residue stretch at 1612–1652 (QAEECGILNGCENGRCVRVQEGYTCDCFDGYHLDMAKMTCV) folds into the EGF-like 17 domain. Cystine bridges form between cysteine 1616–cysteine 1627, cysteine 1622–cysteine 1636, cysteine 1638–cysteine 1651, cysteine 1657–cysteine 1672, cysteine 1667–cysteine 1681, and cysteine 1683–cysteine 1696. An EGF-like 18; calcium-binding domain is found at 1653–1697 (DVNECSELNNRMSLCKNAKCINTEGSYKCLCLPGYIPSDKPNYCT). Serine 1678 is a glycosylation site (O-linked (Glc) serine).

Belongs to the LTBP family. In terms of assembly, interacts with TGFB1; associates via disulfide bonds with the Latency-associated peptide chain (LAP) regulatory chain of TGFB1, leading to regulate activation of TGF-beta-1. LTBP1 does not bind directly to TGF-beta-1, the active chain of TGFB1. Interacts (via C-terminal domain) with FBN1 (via N-terminal domain). Interacts with FBN2. Interacts with ADAMTSL2. Interacts with EFEMP2. Post-translationally, contains hydroxylated asparagine residues. Two intrachain disulfide bonds from the TB3 domain are rearranged upon TGFB1 binding, and form interchain bonds with TGFB1 propeptide, anchoring it to the extracellular matrix. In terms of processing, O-glycosylated on serine residues by POGLUT2 and POGLUT3.

Its subcellular location is the secreted. The protein localises to the extracellular space. It localises to the extracellular matrix. Its function is as follows. Key regulator of transforming growth factor beta (TGFB1, TGFB2 and TGFB3) that controls TGF-beta activation by maintaining it in a latent state during storage in extracellular space. Associates specifically via disulfide bonds with the Latency-associated peptide (LAP), which is the regulatory chain of TGF-beta, and regulates integrin-dependent activation of TGF-beta. Outcompeted by LRRC32/GARP for binding to LAP regulatory chain of TGF-beta. This chain is Latent-transforming growth factor beta-binding protein 1, found in Mus musculus (Mouse).